We begin with the raw amino-acid sequence, 231 residues long: Large ribosomal subunit protein uL1 (231 aa).

The protein belongs to the universal ribosomal protein uL1 family. As to quaternary structure, part of the 50S ribosomal subunit.

Its function is as follows. Binds directly to 23S rRNA. The L1 stalk is quite mobile in the ribosome, and is involved in E site tRNA release. In terms of biological role, protein L1 is also a translational repressor protein, it controls the translation of the L11 operon by binding to its mRNA. This chain is Large ribosomal subunit protein uL1, found in Staphylococcus epidermidis (strain ATCC 35984 / DSM 28319 / BCRC 17069 / CCUG 31568 / BM 3577 / RP62A).